Reading from the N-terminus, the 271-residue chain is HTH-type transcriptional repressor AllR (271 aa).

The 63-residue stretch at 21–83 (AQALERGIAI…SQLGWWHIGL (63 aa)) folds into the HTH iclR-type domain. A DNA-binding region (H-T-H motif) is located at residues 43-62 (VSDISLNLDLPLSTTFRLLK). One can recognise an IclR-ED domain in the interval 98–267 (VLSVAGPFMR…ARDISTALGL (170 aa)). Glyoxylate is bound by residues 154–156 (SGA), aspartate 207, cysteine 217, and 234–236 (SIS).

In terms of biological role, negative regulator of allantoin and glyoxylate utilization operons. Binds to the gcl promoter and to the allS-allA intergenic region. This is HTH-type transcriptional repressor AllR (allR) from Escherichia coli (strain UTI89 / UPEC).